Here is a 402-residue protein sequence, read N- to C-terminus: Phosphoglycerate kinase (402 aa).

Substrate-binding positions include 24–26 (DFN), Arg-40, 63–66 (HFGR), Arg-122, and Arg-155. ATP is bound by residues Lys-206, Gly-297, Glu-328, and 358 to 361 (GGDS).

The protein belongs to the phosphoglycerate kinase family. Monomer.

It is found in the cytoplasm. The catalysed reaction is (2R)-3-phosphoglycerate + ATP = (2R)-3-phospho-glyceroyl phosphate + ADP. It participates in carbohydrate degradation; glycolysis; pyruvate from D-glyceraldehyde 3-phosphate: step 2/5. In Prochlorococcus marinus (strain AS9601), this protein is Phosphoglycerate kinase.